The primary structure comprises 236 residues: tRNA (guanine-N(7)-)-methyltransferase (236 aa).

S-adenosyl-L-methionine-binding positions include Gly54, 77–78, 110–111, and Leu130; these read EI and NA. Asp133 is an active-site residue. 208 to 210 provides a ligand contact to S-adenosyl-L-methionine; it reads TEE.

The protein belongs to the class I-like SAM-binding methyltransferase superfamily. TrmB family.

It localises to the nucleus. The enzyme catalyses guanosine(46) in tRNA + S-adenosyl-L-methionine = N(7)-methylguanosine(46) in tRNA + S-adenosyl-L-homocysteine. It participates in tRNA modification; N(7)-methylguanine-tRNA biosynthesis. In terms of biological role, catalyzes the formation of N(7)-methylguanine at position 46 (m7G46) in tRNA. The chain is tRNA (guanine-N(7)-)-methyltransferase from Bombyx mori (Silk moth).